Consider the following 74-residue polypeptide: MNINSDYIVIKALEDGVNVIGLTRGADTRFHHSEKLDKGEVLIAQFTEHTSAIKVRGKAYIQTRHGEIESEGKK.

It belongs to the MtrB family. Oligomer of 11 identical subunits arranged in doughnut-like structure.

In terms of biological role, required for transcription attenuation control in the Trp operon. This trans-acting factor seems to recognize a 10 bases nucleotide sequence in the Trp leader transcript causing transcription termination. Binds the leader RNA only in presence of L-tryptophan. This Geobacillus sp. (strain WCH70) protein is Transcription attenuation protein MtrB.